Consider the following 248-residue polypeptide: tRNA (guanine-N(7)-)-methyltransferase (248 aa).

S-adenosyl-L-methionine is bound by residues Gly70, 93 to 94, 129 to 130, and Leu149; these read EI and NA. Asp152 is a catalytic residue. An S-adenosyl-L-methionine-binding site is contributed by 227–229; sequence SEE.

Belongs to the class I-like SAM-binding methyltransferase superfamily. TrmB family.

It localises to the nucleus. The catalysed reaction is guanosine(46) in tRNA + S-adenosyl-L-methionine = N(7)-methylguanosine(46) in tRNA + S-adenosyl-L-homocysteine. Its pathway is tRNA modification; N(7)-methylguanine-tRNA biosynthesis. Catalyzes the formation of N(7)-methylguanine at position 46 (m7G46) in tRNA. This chain is tRNA (guanine-N(7)-)-methyltransferase, found in Drosophila mojavensis (Fruit fly).